Reading from the N-terminus, the 263-residue chain is Imidazole glycerol phosphate synthase subunit HisF (263 aa).

Catalysis depends on residues Asp11 and Asp130.

The protein belongs to the HisA/HisF family. As to quaternary structure, heterodimer of HisH and HisF.

It is found in the cytoplasm. It catalyses the reaction 5-[(5-phospho-1-deoxy-D-ribulos-1-ylimino)methylamino]-1-(5-phospho-beta-D-ribosyl)imidazole-4-carboxamide + L-glutamine = D-erythro-1-(imidazol-4-yl)glycerol 3-phosphate + 5-amino-1-(5-phospho-beta-D-ribosyl)imidazole-4-carboxamide + L-glutamate + H(+). It participates in amino-acid biosynthesis; L-histidine biosynthesis; L-histidine from 5-phospho-alpha-D-ribose 1-diphosphate: step 5/9. Functionally, IGPS catalyzes the conversion of PRFAR and glutamine to IGP, AICAR and glutamate. The HisF subunit catalyzes the cyclization activity that produces IGP and AICAR from PRFAR using the ammonia provided by the HisH subunit. This Synechococcus sp. (strain CC9311) protein is Imidazole glycerol phosphate synthase subunit HisF.